Reading from the N-terminus, the 346-residue chain is Trans-enoyl reductase FFUJ_12240 (346 aa).

Histidine 40–lysine 43 provides a ligand contact to NADP(+). Leucine 124 to leucine 131 is a binding site for substrate. NADP(+) contacts are provided by residues alanine 157–threonine 160, serine 180–asparagine 183, tyrosine 198, and leucine 245–glutamate 246. Alanine 266–leucine 270 is a binding site for substrate. Valine 335–histidine 336 contacts NADP(+).

This sequence belongs to the zinc-containing alcohol dehydrogenase family.

In terms of biological role, trans-enoyl reductase; part of the gene cluster that mediates the biosynthesis of fujikurins A-D, secondary metabolites playing a role during rice infection. The polyketide synthase PKS19 acts with the trans-enoyl reductase FFUJ_12240 and the polyketide transferase FFUJ_12241 to produce fujikurins, however, the biosynthesis pathway has not been identified yet. The protein is Trans-enoyl reductase FFUJ_12240 of Gibberella fujikuroi (strain CBS 195.34 / IMI 58289 / NRRL A-6831) (Bakanae and foot rot disease fungus).